Reading from the N-terminus, the 204-residue chain is Nascent polypeptide-associated complex subunit alpha (204 aa).

A compositionally biased stretch (basic and acidic residues) spans 1-19 (MADPRVEELPDEEVPKTNV). 2 disordered regions span residues 1 to 48 (MADP…HSRN) and 119 to 167 (LAAA…GLEA). Residues 22–32 (AGSDSESEAGE) are compositionally biased toward acidic residues. The NAC-A/B domain occupies 46–111 (SRNEKKARKA…AKIEDLNSQA (66 aa)). The segment covering 119–128 (LAAAEAAAGE) has biased composition (low complexity). A compositionally biased stretch (basic and acidic residues) spans 129–151 (HAGHDHDHDHGKGKAPETEAKKE). The span at 152–164 (EEEDDGEEVDETG) shows a compositional bias: acidic residues. Positions 165-204 (LEAKDIELVMAQANVSRKKAVKALRENDNDIVNSIMALSI) constitute a UBA domain.

The protein belongs to the NAC-alpha family. As to quaternary structure, part of the nascent polypeptide-associated complex (NAC), consisting of egd2 and egd1. NAC associates with ribosomes via egd1.

It is found in the cytoplasm. The protein resides in the nucleus. Component of the nascent polypeptide-associated complex (NAC), a dynamic component of the ribosomal exit tunnel, protecting the emerging polypeptides from interaction with other cytoplasmic proteins to ensure appropriate nascent protein targeting. The NAC complex also promotes mitochondrial protein import by enhancing productive ribosome interactions with the outer mitochondrial membrane and blocks the inappropriate interaction of ribosomes translating non-secretory nascent polypeptides with translocation sites in the membrane of the endoplasmic reticulum. Egd2 may also be involved in transcription regulation. In Aspergillus clavatus (strain ATCC 1007 / CBS 513.65 / DSM 816 / NCTC 3887 / NRRL 1 / QM 1276 / 107), this protein is Nascent polypeptide-associated complex subunit alpha (egd2).